The following is a 521-amino-acid chain: Methionine--tRNA ligase (521 aa).

Residues 14–24 (YYSSGNPHIGH) carry the 'HIGH' region motif. Zn(2+) is bound by residues Cys-129, Cys-132, Cys-151, and His-155. Positions 306–310 (KMSKS) match the 'KMSKS' region motif. Lys-309 lines the ATP pocket.

The protein belongs to the class-I aminoacyl-tRNA synthetase family. MetG type 2A subfamily. Monomer. It depends on Zn(2+) as a cofactor.

The protein resides in the cytoplasm. It catalyses the reaction tRNA(Met) + L-methionine + ATP = L-methionyl-tRNA(Met) + AMP + diphosphate. Is required not only for elongation of protein synthesis but also for the initiation of all mRNA translation through initiator tRNA(fMet) aminoacylation. The polypeptide is Methionine--tRNA ligase (Ureaplasma parvum serovar 3 (strain ATCC 700970)).